The chain runs to 498 residues: MRINPTTSSPGVPALEKKNLGRIAQIIGPVLDVAFPPGKMPNIYNALVVKGRDTVGQQINVTCEVQQLLGNNRVRAVAMSATDGLMRGMEVIDTGAPLSVPVGGATLGRIFNVLGEPIDNLGPVDTRTTSPIHRSAPAFIQLDTKLSIFETGIKVVDLLAPYRRGGKIGLFGGAGVGKTVLIMELINNIAKAHGGVSVFGGVGERTREGNDLYMEMKESGVINEQNIAESKVALVYGQMNEPPGARMRVGLTALTMAEYFRDVNEQDVLLFIDNIFRFVQAGSEVSALLGRMPSAVGYQPTLSTEMGSLQERITSTKEGSITSIQAVYVPADDLTDPAPATTFAHLDATTVLSRGLAAKGIYPAVDPLDSTSTMLQPRIVGEEHYETAQRVRQTLQRYKELQDIIAILGLDELSEEDRLTVARARKIERFLSQPFFVAEVFTGSPGKYVGLAETIRGFKLILSGELDGLPEQAFYLVGNIDEATAKAMNLEMENKLKK.

Residue 172–179 (GGAGVGKT) coordinates ATP.

The protein belongs to the ATPase alpha/beta chains family. F-type ATPases have 2 components, CF(1) - the catalytic core - and CF(0) - the membrane proton channel. CF(1) has five subunits: alpha(3), beta(3), gamma(1), delta(1), epsilon(1). CF(0) has four main subunits: a(1), b(1), b'(1) and c(9-12).

Its subcellular location is the plastid. It is found in the chloroplast thylakoid membrane. It carries out the reaction ATP + H2O + 4 H(+)(in) = ADP + phosphate + 5 H(+)(out). Functionally, produces ATP from ADP in the presence of a proton gradient across the membrane. The catalytic sites are hosted primarily by the beta subunits. The polypeptide is ATP synthase subunit beta, chloroplastic (Morus indica (Mulberry)).